The chain runs to 448 residues: Tubulin beta chain (448 aa).

8 residues coordinate GTP: glutamine 11, glutamate 69, serine 138, glycine 142, threonine 143, glycine 144, asparagine 204, and asparagine 226. Residue glutamate 69 participates in Mg(2+) binding. Residues 429–448 (SISDGEEQPYAEEAAYEAEE) are disordered. Over residues 432–448 (DGEEQPYAEEAAYEAEE) the composition is skewed to acidic residues.

It belongs to the tubulin family. Dimer of alpha and beta chains. A typical microtubule is a hollow water-filled tube with an outer diameter of 25 nm and an inner diameter of 15 nM. Alpha-beta heterodimers associate head-to-tail to form protofilaments running lengthwise along the microtubule wall with the beta-tubulin subunit facing the microtubule plus end conferring a structural polarity. Microtubules usually have 13 protofilaments but different protofilament numbers can be found in some organisms and specialized cells. The cofactor is Mg(2+).

It localises to the cytoplasm. Its subcellular location is the cytoskeleton. In terms of biological role, tubulin is the major constituent of microtubules, a cylinder consisting of laterally associated linear protofilaments composed of alpha- and beta-tubulin heterodimers. Microtubules grow by the addition of GTP-tubulin dimers to the microtubule end, where a stabilizing cap forms. Below the cap, tubulin dimers are in GDP-bound state, owing to GTPase activity of alpha-tubulin. The polypeptide is Tubulin beta chain (Aspergillus fumigatus (strain ATCC MYA-4609 / CBS 101355 / FGSC A1100 / Af293) (Neosartorya fumigata)).